We begin with the raw amino-acid sequence, 404 residues long: Cysteine desulfurase IscS (404 aa).

Residues 75 to 76 (AT), asparagine 155, glutamine 183, and 203 to 205 (SGH) each bind pyridoxal 5'-phosphate. Lysine 206 is modified (N6-(pyridoxal phosphate)lysine). Threonine 243 is a pyridoxal 5'-phosphate binding site. The Cysteine persulfide intermediate role is filled by cysteine 328. A [2Fe-2S] cluster-binding site is contributed by cysteine 328.

Belongs to the class-V pyridoxal-phosphate-dependent aminotransferase family. NifS/IscS subfamily. In terms of assembly, homodimer. Forms a heterotetramer with IscU, interacts with other sulfur acceptors. Requires pyridoxal 5'-phosphate as cofactor.

The protein resides in the cytoplasm. The catalysed reaction is (sulfur carrier)-H + L-cysteine = (sulfur carrier)-SH + L-alanine. The protein operates within cofactor biosynthesis; iron-sulfur cluster biosynthesis. Its function is as follows. Master enzyme that delivers sulfur to a number of partners involved in Fe-S cluster assembly, tRNA modification or cofactor biosynthesis. Catalyzes the removal of elemental sulfur atoms from cysteine to produce alanine. Functions as a sulfur delivery protein for Fe-S cluster synthesis onto IscU, an Fe-S scaffold assembly protein, as well as other S acceptor proteins. This is Cysteine desulfurase IscS from Shewanella baltica (strain OS223).